Here is an 86-residue protein sequence, read N- to C-terminus: RNA-binding protein Hfq (86 aa).

The Sm domain occupies Asp-9–Val-68. The segment at Arg-66–Ala-86 is disordered. Positions Asp-75–Ala-86 are enriched in basic and acidic residues.

The protein belongs to the Hfq family. As to quaternary structure, homohexamer.

RNA chaperone that binds small regulatory RNA (sRNAs) and mRNAs to facilitate mRNA translational regulation in response to envelope stress, environmental stress and changes in metabolite concentrations. Also binds with high specificity to tRNAs. The polypeptide is RNA-binding protein Hfq (Pseudomonas entomophila (strain L48)).